A 382-amino-acid polypeptide reads, in one-letter code: Mannitol-1-phosphate 5-dehydrogenase (382 aa).

Residue 3-14 (ALHFGAGNIGRG) coordinates NAD(+).

It belongs to the mannitol dehydrogenase family.

The enzyme catalyses D-mannitol 1-phosphate + NAD(+) = beta-D-fructose 6-phosphate + NADH + H(+). The sequence is that of Mannitol-1-phosphate 5-dehydrogenase from Salmonella typhi.